A 111-amino-acid polypeptide reads, in one-letter code: Phosphoribosyl-ATP pyrophosphatase (111 aa).

The protein belongs to the PRA-PH family.

Its subcellular location is the cytoplasm. It carries out the reaction 1-(5-phospho-beta-D-ribosyl)-ATP + H2O = 1-(5-phospho-beta-D-ribosyl)-5'-AMP + diphosphate + H(+). It functions in the pathway amino-acid biosynthesis; L-histidine biosynthesis; L-histidine from 5-phospho-alpha-D-ribose 1-diphosphate: step 2/9. This chain is Phosphoribosyl-ATP pyrophosphatase, found in Pseudomonas paraeruginosa (strain DSM 24068 / PA7) (Pseudomonas aeruginosa (strain PA7)).